A 156-amino-acid chain; its full sequence is Peptide methionine sulfoxide reductase MsrA (156 aa).

Cys-10 is an active-site residue.

This sequence belongs to the MsrA Met sulfoxide reductase family.

The catalysed reaction is L-methionyl-[protein] + [thioredoxin]-disulfide + H2O = L-methionyl-(S)-S-oxide-[protein] + [thioredoxin]-dithiol. It carries out the reaction [thioredoxin]-disulfide + L-methionine + H2O = L-methionine (S)-S-oxide + [thioredoxin]-dithiol. Its function is as follows. Has an important function as a repair enzyme for proteins that have been inactivated by oxidation. Catalyzes the reversible oxidation-reduction of methionine sulfoxide in proteins to methionine. This Acidobacterium capsulatum (strain ATCC 51196 / DSM 11244 / BCRC 80197 / JCM 7670 / NBRC 15755 / NCIMB 13165 / 161) protein is Peptide methionine sulfoxide reductase MsrA.